Consider the following 358-residue polypeptide: Alanine racemase (358 aa).

K34 acts as the Proton acceptor; specific for D-alanine in catalysis. K34 bears the N6-(pyridoxal phosphate)lysine mark. R129 contacts substrate. Y254 functions as the Proton acceptor; specific for L-alanine in the catalytic mechanism. M302 serves as a coordination point for substrate.

It belongs to the alanine racemase family. Requires pyridoxal 5'-phosphate as cofactor.

It carries out the reaction L-alanine = D-alanine. It participates in amino-acid biosynthesis; D-alanine biosynthesis; D-alanine from L-alanine: step 1/1. Its function is as follows. Catalyzes the interconversion of L-alanine and D-alanine. May also act on other amino acids. This is Alanine racemase (alr) from Aliivibrio salmonicida (strain LFI1238) (Vibrio salmonicida (strain LFI1238)).